Here is a 1115-residue protein sequence, read N- to C-terminus: Phytochrome E (1115 aa).

The GAF domain maps to 213–383 (DIGTLCDTVV…AFSLQLYMEL (171 aa)). C318 contributes to the phytochromobilin binding site. In terms of domain architecture, PAS 1 spans 598-669 (MALELVRLVE…ALMCRALQGE (72 aa)). Residues 672 to 728 (RNVEVKLLKFGNHPTKEVVYLVVNACTSRDYKNDIIGVCFVGQDITPEKAVMDKFVR) enclose the PAC domain. In terms of domain architecture, PAS 2 spans 732 to 803 (DYEAIIQSLN…DALTKFMILL (72 aa)). The Histidine kinase domain occupies 880–1100 (YIQQQMKNPL…YFLIDLDFKT (221 aa)).

This sequence belongs to the phytochrome family. Homodimer. Post-translationally, contains one covalently linked phytochromobilin chromophore.

In terms of biological role, regulatory photoreceptor which exists in two forms that are reversibly interconvertible by light: the Pr form that absorbs maximally in the red region of the spectrum and the Pfr form that absorbs maximally in the far-red region. Photoconversion of Pr to Pfr induces an array of morphogenic responses, whereas reconversion of Pfr to Pr cancels the induction of those responses. Pfr controls the expression of a number of nuclear genes including those encoding the small subunit of ribulose-bisphosphate carboxylase, chlorophyll A/B binding protein, protochlorophyllide reductase, rRNA, etc. It also controls the expression of its own gene(s) in a negative feedback fashion. This chain is Phytochrome E (PHYE), found in Ipomoea nil (Japanese morning glory).